The primary structure comprises 96 residues: LSM complex subunit lsm2 (96 aa).

The Sm domain maps to 2-76 (LFYSFFKTLI…VRYVHMSSAY (75 aa)).

It belongs to the snRNP Sm proteins family. As to quaternary structure, component of the heptameric LSM1-LSM7 complex that forms a seven-membered ring structure with a donut shape. The LSm subunits are arranged in the order lsm1, lsm2, lsm3, lsm6, lsm5, lsm7 and lsm4. Component of the heptameric LSM2-LSM8 complex that forms a seven-membered ring structure with a donut shape. The LSm subunits are arranged in the order lsm8, lsm2, lsm3, lsm6, lsm5, lsm7 and lsm4.

Its subcellular location is the nucleus. The protein localises to the cytoplasm. Component of LSm protein complexes, which are involved in RNA processing and may function in a chaperone-like manner. Component of the cytoplasmic LSM1-LSM7 complex which is involved in mRNA degradation by activating the decapping step. The LSM1-LSM7 complex loads onto the 3'-end of single stranded RNA. Component of the nuclear LSM2-LSM8 complex, which is involved in spliceosome assembly. The LSM2-LSM8 complex plays a role in the biogenesis of the spliceosomal U4/U6-U5 tri-snRNP complex by accelerating prp24-mediated annealing of U4/U6 di-snRNA. The LSM2-LSM8 complex binds U6 snRNA terminating with a cyclic 2',3' phosphate group; RNA with an unmodified 3' hydroxyl or non-cyclic 3' phosphate is bound less tightly. This Schizosaccharomyces pombe (strain 972 / ATCC 24843) (Fission yeast) protein is LSM complex subunit lsm2 (lsm2).